The chain runs to 657 residues: UvrABC system protein B (657 aa).

The region spanning 25–163 (ASIKNGNKYQ…QGMVLFLEIN (139 aa)) is the Helicase ATP-binding domain. Residue 38-45 (GVTGSGKT) coordinates ATP. Residues 91 to 114 (YYDYYQPEAYIPRQDLFIEKDSSI) carry the Beta-hairpin motif. The short motif at 130–133 (LSFD) is the DEAD box element. Residues 433–599 (QVEILYDMAK…SVSRNVEESL (167 aa)) enclose the Helicase C-terminal domain. In terms of domain architecture, UVR spans 622–657 (AKIVKDLRKQMMEAADKLEFEKAAALRDEIKKMRKL).

The protein belongs to the UvrB family. Forms a heterotetramer with UvrA during the search for lesions. Interacts with UvrC in an incision complex.

It localises to the cytoplasm. Functionally, the UvrABC repair system catalyzes the recognition and processing of DNA lesions. A damage recognition complex composed of 2 UvrA and 2 UvrB subunits scans DNA for abnormalities. Upon binding of the UvrA(2)B(2) complex to a putative damaged site, the DNA wraps around one UvrB monomer. DNA wrap is dependent on ATP binding by UvrB and probably causes local melting of the DNA helix, facilitating insertion of UvrB beta-hairpin between the DNA strands. Then UvrB probes one DNA strand for the presence of a lesion. If a lesion is found the UvrA subunits dissociate and the UvrB-DNA preincision complex is formed. This complex is subsequently bound by UvrC and the second UvrB is released. If no lesion is found, the DNA wraps around the other UvrB subunit that will check the other stand for damage. The protein is UvrABC system protein B of Campylobacter hominis (strain ATCC BAA-381 / DSM 21671 / CCUG 45161 / LMG 19568 / NCTC 13146 / CH001A).